We begin with the raw amino-acid sequence, 347 residues long: Adenine deaminase (347 aa).

Zn(2+)-binding residues include H16, H18, and H204. Catalysis depends on E207, which acts as the Proton donor. A Zn(2+)-binding site is contributed by D285. A substrate-binding site is contributed by D286.

It belongs to the metallo-dependent hydrolases superfamily. Adenosine and AMP deaminases family. Adenine deaminase type 2 subfamily. Zn(2+) serves as cofactor.

It is found in the cytoplasm. The protein resides in the nucleus. It catalyses the reaction adenine + H2O + H(+) = hypoxanthine + NH4(+). Its function is as follows. Catalyzes the hydrolytic deamination of adenine to hypoxanthine. Plays an important role in the purine salvage pathway and in nitrogen catabolism. The protein is Adenine deaminase of Candida glabrata (strain ATCC 2001 / BCRC 20586 / JCM 3761 / NBRC 0622 / NRRL Y-65 / CBS 138) (Yeast).